The chain runs to 316 residues: UDP-N-acetylenolpyruvoylglucosamine reductase (316 aa).

The FAD-binding PCMH-type domain occupies 30 to 194 (VGGEADYLVF…LSVKFALAPG (165 aa)). The active site involves Arg-173. Ser-223 functions as the Proton donor in the catalytic mechanism. Glu-293 is a catalytic residue.

Belongs to the MurB family. Requires FAD as cofactor.

It localises to the cytoplasm. It catalyses the reaction UDP-N-acetyl-alpha-D-muramate + NADP(+) = UDP-N-acetyl-3-O-(1-carboxyvinyl)-alpha-D-glucosamine + NADPH + H(+). It participates in cell wall biogenesis; peptidoglycan biosynthesis. Functionally, cell wall formation. This chain is UDP-N-acetylenolpyruvoylglucosamine reductase, found in Streptococcus pneumoniae serotype 2 (strain D39 / NCTC 7466).